We begin with the raw amino-acid sequence, 441 residues long: Mitochondrial distribution and morphology protein 12 (441 aa).

One can recognise an SMP-LTD domain in the interval 1–441 (MSIDIDWERA…VYPSFWTFLV (441 aa)). The segment at 180–289 (TPLRAVTRGN…SGTPPRRMRE (110 aa)) is disordered. Composition is skewed to polar residues over residues 226-245 (SRPS…SVST) and 253-263 (SSQTVLANNPG).

Belongs to the MDM12 family. In terms of assembly, component of the ER-mitochondria encounter structure (ERMES) or MDM complex, composed of MMM1, MDM10, MDM12 and MDM34. An MMM1 homodimer associates with one molecule of MDM12 on each side in a pairwise head-to-tail manner, and the SMP-LTD domains of MMM1 and MDM12 generate a continuous hydrophobic tunnel for phospholipid trafficking.

Its subcellular location is the mitochondrion outer membrane. It is found in the endoplasmic reticulum membrane. Component of the ERMES/MDM complex, which serves as a molecular tether to connect the endoplasmic reticulum (ER) and mitochondria. Components of this complex are involved in the control of mitochondrial shape and protein biogenesis, and function in nonvesicular lipid trafficking between the ER and mitochondria. MDM12 is required for the interaction of the ER-resident membrane protein MMM1 and the outer mitochondrial membrane-resident beta-barrel protein MDM10. The MDM12-MMM1 subcomplex functions in the major beta-barrel assembly pathway that is responsible for biogenesis of all mitochondrial outer membrane beta-barrel proteins, and acts in a late step after the SAM complex. The MDM10-MDM12-MMM1 subcomplex further acts in the TOM40-specific pathway after the action of the MDM12-MMM1 complex. Essential for establishing and maintaining the structure of mitochondria and maintenance of mtDNA nucleoids. The sequence is that of Mitochondrial distribution and morphology protein 12 from Paracoccidioides brasiliensis (strain Pb18).